The primary structure comprises 141 residues: 3-hydroxyacyl-[acyl-carrier-protein] dehydratase FabZ (141 aa).

H47 is an active-site residue.

It belongs to the thioester dehydratase family. FabZ subfamily.

The protein resides in the cytoplasm. The enzyme catalyses a (3R)-hydroxyacyl-[ACP] = a (2E)-enoyl-[ACP] + H2O. In terms of biological role, involved in unsaturated fatty acids biosynthesis. Catalyzes the dehydration of short chain beta-hydroxyacyl-ACPs and long chain saturated and unsaturated beta-hydroxyacyl-ACPs. The chain is 3-hydroxyacyl-[acyl-carrier-protein] dehydratase FabZ from Caldanaerobacter subterraneus subsp. tengcongensis (strain DSM 15242 / JCM 11007 / NBRC 100824 / MB4) (Thermoanaerobacter tengcongensis).